Here is a 362-residue protein sequence, read N- to C-terminus: Phosphoserine aminotransferase (362 aa).

Arginine 43 contacts L-glutamate. Pyridoxal 5'-phosphate contacts are provided by residues 77–78 (AR), tryptophan 103, threonine 153, aspartate 173, and glutamine 196. Lysine 197 is modified (N6-(pyridoxal phosphate)lysine).

Belongs to the class-V pyridoxal-phosphate-dependent aminotransferase family. SerC subfamily. In terms of assembly, homodimer. The cofactor is pyridoxal 5'-phosphate.

The protein resides in the cytoplasm. The catalysed reaction is O-phospho-L-serine + 2-oxoglutarate = 3-phosphooxypyruvate + L-glutamate. The enzyme catalyses 4-(phosphooxy)-L-threonine + 2-oxoglutarate = (R)-3-hydroxy-2-oxo-4-phosphooxybutanoate + L-glutamate. The protein operates within amino-acid biosynthesis; L-serine biosynthesis; L-serine from 3-phospho-D-glycerate: step 2/3. It participates in cofactor biosynthesis; pyridoxine 5'-phosphate biosynthesis; pyridoxine 5'-phosphate from D-erythrose 4-phosphate: step 3/5. Functionally, catalyzes the reversible conversion of 3-phosphohydroxypyruvate to phosphoserine and of 3-hydroxy-2-oxo-4-phosphonooxybutanoate to phosphohydroxythreonine. In Legionella pneumophila (strain Lens), this protein is Phosphoserine aminotransferase.